The chain runs to 305 residues: tRNA dimethylallyltransferase (305 aa).

8 to 15 (GPTASGKT) is an ATP binding site. 10–15 (TASGKT) is a binding site for substrate. The tract at residues 33-36 (DSQQ) is interaction with substrate tRNA.

The protein belongs to the IPP transferase family. As to quaternary structure, monomer. Mg(2+) is required as a cofactor.

The catalysed reaction is adenosine(37) in tRNA + dimethylallyl diphosphate = N(6)-dimethylallyladenosine(37) in tRNA + diphosphate. Functionally, catalyzes the transfer of a dimethylallyl group onto the adenine at position 37 in tRNAs that read codons beginning with uridine, leading to the formation of N6-(dimethylallyl)adenosine (i(6)A). The chain is tRNA dimethylallyltransferase from Anaeromyxobacter sp. (strain K).